The following is a 120-amino-acid chain: NAD(P)H-quinone oxidoreductase subunit 3, chloroplastic (120 aa).

Helical transmembrane passes span 9–29, 64–84, and 88–108; these read IFWA…FISG, MFAL…PWAM, and VLGV…IVGL.

It belongs to the complex I subunit 3 family. As to quaternary structure, NDH is composed of at least 16 different subunits, 5 of which are encoded in the nucleus.

The protein localises to the plastid. It is found in the chloroplast thylakoid membrane. The catalysed reaction is a plastoquinone + NADH + (n+1) H(+)(in) = a plastoquinol + NAD(+) + n H(+)(out). It catalyses the reaction a plastoquinone + NADPH + (n+1) H(+)(in) = a plastoquinol + NADP(+) + n H(+)(out). NDH shuttles electrons from NAD(P)H:plastoquinone, via FMN and iron-sulfur (Fe-S) centers, to quinones in the photosynthetic chain and possibly in a chloroplast respiratory chain. The immediate electron acceptor for the enzyme in this species is believed to be plastoquinone. Couples the redox reaction to proton translocation, and thus conserves the redox energy in a proton gradient. In Lactuca sativa (Garden lettuce), this protein is NAD(P)H-quinone oxidoreductase subunit 3, chloroplastic.